The chain runs to 423 residues: Phosphoribosylamine--glycine ligase (423 aa).

Residues 107 to 312 (KAFADRYGLP…LVPYLVACAN (206 aa)) enclose the ATP-grasp domain. ATP is bound at residue 133–193 (LELFEPPYVI…EEFLEGEIGS (61 aa)). Mg(2+) contacts are provided by E270, E282, and N284. Mn(2+)-binding residues include E270, E282, and N284.

This sequence belongs to the GARS family. It depends on Mg(2+) as a cofactor. The cofactor is Mn(2+).

It carries out the reaction 5-phospho-beta-D-ribosylamine + glycine + ATP = N(1)-(5-phospho-beta-D-ribosyl)glycinamide + ADP + phosphate + H(+). It functions in the pathway purine metabolism; IMP biosynthesis via de novo pathway; N(1)-(5-phospho-D-ribosyl)glycinamide from 5-phospho-alpha-D-ribose 1-diphosphate: step 2/2. The protein is Phosphoribosylamine--glycine ligase of Phenylobacterium zucineum (strain HLK1).